Reading from the N-terminus, the 72-residue chain is Sec-independent protein translocase protein TatA (72 aa).

A helical transmembrane segment spans residues 1–21 (MAGLSIWHVVIFAIVVILLFG). Positions 47 to 72 (DEAASLNSPRTIDAQVKTSESTSVKS) are disordered. Residues 51–72 (SLNSPRTIDAQVKTSESTSVKS) show a composition bias toward polar residues.

It belongs to the TatA/E family. As to quaternary structure, the Tat system comprises two distinct complexes: a TatABC complex, containing multiple copies of TatA, TatB and TatC subunits, and a separate TatA complex, containing only TatA subunits. Substrates initially bind to the TatABC complex, which probably triggers association of the separate TatA complex to form the active translocon.

Its subcellular location is the cell inner membrane. Its function is as follows. Part of the twin-arginine translocation (Tat) system that transports large folded proteins containing a characteristic twin-arginine motif in their signal peptide across membranes. TatA could form the protein-conducting channel of the Tat system. The polypeptide is Sec-independent protein translocase protein TatA (Acinetobacter baumannii (strain AB307-0294)).